The sequence spans 358 residues: Mesaconyl-CoA hydratase (358 aa).

The protein belongs to the enoyl-CoA hydratase/isomerase family. Homodimer.

The enzyme catalyses (2R,3S)-beta-methylmalyl-CoA = 2-methylfumaryl-CoA + H2O. With respect to regulation, shows highest activity at 0.5 M KCl. Does not require divalent ions for activity. Functionally, involved in the methylaspartate cycle. Catalyzes the reversible hydration of mesaconyl-CoA (2-methylfumaryl-CoA) to yield beta-methylmalyl-CoA ((2R,3S)-beta-methylmalyl-CoA). Also shows activity with mesaconyl-C4-CoA (3-methylfumaryl-CoA), (S)-citramalyl-CoA and (S)-malyl-CoA. This Haloarcula hispanica (strain ATCC 33960 / DSM 4426 / JCM 8911 / NBRC 102182 / NCIMB 2187 / VKM B-1755) protein is Mesaconyl-CoA hydratase.